The chain runs to 244 residues: tRNA pseudouridine synthase A (244 aa).

Aspartate 52 (nucleophile) is an active-site residue. Tyrosine 110 is a binding site for substrate.

This sequence belongs to the tRNA pseudouridine synthase TruA family. In terms of assembly, homodimer.

It carries out the reaction uridine(38/39/40) in tRNA = pseudouridine(38/39/40) in tRNA. In terms of biological role, formation of pseudouridine at positions 38, 39 and 40 in the anticodon stem and loop of transfer RNAs. This is tRNA pseudouridine synthase A from Thermoanaerobacter pseudethanolicus (strain ATCC 33223 / 39E) (Clostridium thermohydrosulfuricum).